Here is a 543-residue protein sequence, read N- to C-terminus: Pectate disaccharide-lyase (543 aa).

It belongs to the polysaccharide lyase 2 family. Cu cation is required as a cofactor. Requires Mn(2+) as cofactor. It depends on Ni(2+) as a cofactor.

It localises to the cytoplasm. It catalyses the reaction [(1-&gt;4)-alpha-D-galacturonosyl](n) = 4-(4-deoxy-alpha-D-galact-4-enuronosyl)-D-galacturonate + [(1-&gt;4)-alpha-D-galacturonosyl](n-2). Its pathway is glycan metabolism; pectin degradation. Catalyzes the formation of unsaturated digalacturonates from polygalacturonate or short oligogalacturonates. This is Pectate disaccharide-lyase (pelW) from Dickeya dadantii (strain 3937) (Erwinia chrysanthemi (strain 3937)).